Reading from the N-terminus, the 535-residue chain is Unconventional prefoldin RPB5 interactor 1 (535 aa).

Met1 bears the N-acetylmethionine mark. Disordered regions lie at residues 1–23 (MEAP…PALV), 223–330 (LLGE…VGDN), 352–383 (KNTT…QELP), and 412–431 (SRSR…AAEF). A compositionally biased stretch (pro residues) spans 7–18 (ETPPDPSPPSAP). Polar residues-rich tracts occupy residues 253 to 265 (TNVN…TDSH) and 276 to 296 (EPFS…SSSY). The segment covering 299-320 (DDDDDDDDDDDDDNIDDDDGDN) has biased composition (acidic residues). Ser372 bears the Phosphoserine; by RPS6KB1 mark. Thr373 carries the phosphothreonine modification. Residues 417 to 427 (NSVCSDTSESS) show a composition bias toward polar residues. Ser442 bears the Phosphoserine mark.

Belongs to the RNA polymerase II subunit 5-mediating protein family. As to quaternary structure, homodimer. Component of the PAQosome complex which is responsible for the biogenesis of several protein complexes and which consists of R2TP complex members RUVBL1, RUVBL2, RPAP3 and PIH1D1, URI complex members PFDN2, PFDN6, PDRG1, UXT and URI1 as well as ASDURF, POLR2E and DNAAF10/WDR92. Interacts with POLR2E/RPB5, RUVBL2 and RUVBL1. Interacts with PFDN2, PFDN4 and STAP1; the interactions are phosphorylation-dependent and occur in a growth-dependent manner in the mitochondrion. Interacts with UXT. Interacts with PPP1CC; the interaction is phosphorylation-dependent and occurs in a growth factor-dependent manner. Interacts (via the middle C-terminal region) with GTF2F1 and GTF2F2. Interacts with DMAP1. Interacts with TSC1 and TSC2. Interacts with PRPF8 and EFTUD2 in a ZNHIT2-dependent manner. Post-translationally, phosphorylated. Phosphorylation occurs essentially on serine residues. Phosphorylation occurs in response to androgen treatment in prostate cancer cells in a mTOR-dependent manner. Phosphorylated; hyperhosphorylated in mitochondria in a mTORC-dependent signaling pathway. Phosphorylated at Ser-372 by RPS6KB1 in a growth factor- and rapamycin-dependent manner. S6K1-mediated mitochondrial phosphorylation at Ser-372 disrupts the URI1-PPP1CC complex in the mitochondrion, relieves PPP1CC phosphatase inhibition activity and hence engages a negative feedback diminishing RPS6KB1 kinase activity, preventing sustained S6K1-dependent signaling. In terms of tissue distribution, ubiquitous. Expressed in ovarian cancers (at protein level). Expressed strongly in skeletal muscle. Expressed weakly in brain, heart, pancreas and in prostate epithelial cells.

The protein localises to the nucleus. It is found in the cytoplasm. Its subcellular location is the mitochondrion. It localises to the cell projection. The protein resides in the dendrite. Its function is as follows. Involved in gene transcription regulation. Acts as a transcriptional repressor in concert with the corepressor UXT to regulate androgen receptor (AR) transcription. May act as a tumor suppressor to repress AR-mediated gene transcription and to inhibit anchorage-independent growth in prostate cancer cells. Required for cell survival in ovarian cancer cells. Together with UXT, associates with chromatin to the NKX3-1 promoter region. Antagonizes transcriptional modulation via hepatitis B virus X protein. Functionally, plays a central role in maintaining S6K1 signaling and BAD phosphorylation under normal growth conditions thereby protecting cells from potential deleterious effects of sustained S6K1 signaling. The URI1-PPP1CC complex acts as a central component of a negative feedback mechanism that counteracts excessive S6K1 survival signaling to BAD in response to growth factors. Mediates inhibition of PPP1CC phosphatase activity in mitochondria. Coordinates the regulation of nutrient-sensitive gene expression availability in a mTOR-dependent manner. Seems to be a scaffolding protein able to assemble a prefoldin-like complex that contains PFDs and proteins with roles in transcription and ubiquitination. The polypeptide is Unconventional prefoldin RPB5 interactor 1 (URI1) (Homo sapiens (Human)).